The primary structure comprises 520 residues: D-aminopeptidase (520 aa).

Catalysis depends on Ser-62, which acts as the Nucleophile. Lys-65 (proton donor/acceptor) is an active-site residue. The important for specificity stretch occupies residues 477–487 (QRSMDAPSPGE). Position 481 (Asp-481) interacts with substrate.

This sequence belongs to the peptidase S12 family. In terms of assembly, homodimer.

It catalyses the reaction Release of an N-terminal D-amino acid from a peptide, Xaa-|-Yaa-, in which Xaa is preferably D-Ala, D-Ser or D-Thr. D-amino acid amides and methyl esters also are hydrolyzed, as is glycine amide.. Inhibited by beta-lactam compounds such as 6-aminopenicillic acid, 7-aminocephalosporanic acid, benzylpenicillin and ampicillin. Inhibited by p-chloromercuribenzoate. Its function is as follows. Hydrolyzes N-terminal residues in D-amino acid-containing peptides. This Brucella anthropi (strain ATCC 49188 / DSM 6882 / CCUG 24695 / JCM 21032 / LMG 3331 / NBRC 15819 / NCTC 12168 / Alc 37) (Ochrobactrum anthropi) protein is D-aminopeptidase.